A 167-amino-acid chain; its full sequence is Leptin (167 aa).

The first 21 residues, 1-21 (MRCGSLCRFLWLWSCLSYIEA), serve as a signal peptide directing secretion. Residues Cys-117 and Cys-167 are joined by a disulfide bond.

The protein belongs to the leptin family.

It is found in the secreted. Its function is as follows. Key player in the regulation of energy balance and body weight control. Once released into the circulation, has central and peripheral effects by binding LEPR, found in many tissues, which results in the activation of several major signaling pathways. In the hypothalamus, acts as an appetite-regulating factor that induces a decrease in food intake and an increase in energy consumption by inducing anorexinogenic factors and suppressing orexigenic neuropeptides, also regulates bone mass and secretion of hypothalamo-pituitary-adrenal hormones. In the periphery, increases basal metabolism, influences reproductive function, regulates pancreatic beta-cell function and insulin secretion, is pro-angiogenic for endothelial cell and affects innate and adaptive immunity. In the arcuate nucleus of the hypothalamus, activates by depolarization POMC neurons inducing FOS and SOCS3 expression to release anorexigenic peptides and inhibits by hyperpolarization NPY neurons inducing SOCS3 with a consequent reduction on release of orexigenic peptides. In addition to its known satiety inducing effect, has a modulatory role in nutrient absorption. In the intestine, reduces glucose absorption by enterocytes by activating PKC and leading to a sequential activation of p38, PI3K and ERK signaling pathways which exerts an inhibitory effect on glucose absorption. Acts as a growth factor on certain tissues, through the activation of different signaling pathways increases expression of genes involved in cell cycle regulation such as CCND1, via JAK2-STAT3 pathway, or VEGFA, via MAPK1/3 and PI3K-AKT1 pathways. May also play an apoptotic role via JAK2-STAT3 pathway and up-regulation of BIRC5 expression. Pro-angiogenic, has mitogenic activity on vascular endothelial cells and plays a role in matrix remodeling by regulating the expression of matrix metalloproteinases (MMPs) and tissue inhibitors of metalloproteinases (TIMPs). In innate immunity, modulates the activity and function of neutrophils by increasing chemotaxis and the secretion of oxygen radicals. Increases phagocytosis by macrophages and enhances secretion of pro-inflammatory mediators. Increases cytotoxic ability of NK cells. Plays a pro-inflammatory role, in synergy with IL1B, by inducing NOS2 which promotes the production of IL6, IL8 and Prostaglandin E2, through a signaling pathway that involves JAK2, PI3K, MAP2K1/MEK1 and MAPK14/p38. In adaptive immunity, promotes the switch of memory T-cells towards T helper-1 cell immune responses. Increases CD4(+)CD25(-) T-cell proliferation and reduces autophagy during TCR (T-cell receptor) stimulation, through MTOR signaling pathway activation and BCL2 up-regulation. This is Leptin (LEP) from Phoca vitulina (Harbor seal).